Here is a 678-residue protein sequence, read N- to C-terminus: Vitrin (678 aa).

Residues 1–26 (MRTVVLTMKASVIEMFLVLLVTGVHS) form the signal peptide. An LCCL domain is found at 40-133 (TVPQINCDVK…LSLPRWRESF (94 aa)). Disulfide bonds link Cys-46–Cys-62 and Cys-66–Cys-86. Polar residues predominate over residues 154–168 (SSKSPAAQAGETTKA). Disordered regions lie at residues 154–177 (SSKS…IPGT) and 199–257 (TLPR…GAAF). The segment covering 199–216 (TLPRPSPSAASTTSIPRP) has biased composition (low complexity). Residues 230 to 240 (STATYTSSQNR) show a composition bias toward polar residues. 2 consecutive VWFA domains span residues 293 to 478 (DLSF…VKRV) and 495 to 668 (DIGF…IQNI). N-linked (GlcNAc...) asparagine glycosylation is found at Asn-390 and Asn-520.

As to quaternary structure, binds dermatan sulfate and chondroitin sulfate.

Its subcellular location is the secreted. It is found in the extracellular space. The protein localises to the extracellular matrix. In terms of biological role, promotes matrix assembly and cell adhesiveness. Plays a role in spinal cord formation by regulating the proliferation and differentiation of neural stem cells. The polypeptide is Vitrin (VIT) (Homo sapiens (Human)).